A 402-amino-acid polypeptide reads, in one-letter code: Putative F-box protein At4g22180 (402 aa).

One can recognise an F-box domain in the interval Pro18 to Pro64.

The sequence is that of Putative F-box protein At4g22180 from Arabidopsis thaliana (Mouse-ear cress).